We begin with the raw amino-acid sequence, 226 residues long: NADH-ubiquinone oxidoreductase chain 6 (226 aa).

5 consecutive transmembrane segments (helical) span residues 2-22 (STLGLLIMLLGIIIMCTLVIL), 28-48 (IYSILNLIVIYGCYASILLTV), 56-76 (IYILVNVGAIAVLFLFIVMMI), 90-110 (YNIYMIVGIIGVVGLLGILIT), and 169-189 (IWFIMACIILLIGMVGVIYIT).

The protein belongs to the complex I subunit 6 family.

It is found in the mitochondrion membrane. It carries out the reaction a ubiquinone + NADH + 5 H(+)(in) = a ubiquinol + NAD(+) + 4 H(+)(out). Functionally, core subunit of the mitochondrial membrane respiratory chain NADH dehydrogenase (Complex I) that is believed to belong to the minimal assembly required for catalysis. Complex I functions in the transfer of electrons from NADH to the respiratory chain. The immediate electron acceptor for the enzyme is believed to be ubiquinone. This is NADH-ubiquinone oxidoreductase chain 6 (nad6) from Dictyostelium discoideum (Social amoeba).